The primary structure comprises 218 residues: Sodium channel regulatory subunit beta-1 (218 aa).

Residues 1–18 (MGTLLALVVGAALVSSAW) form the signal peptide. Topologically, residues 19-157 (GGCVEVDSET…DKANRDMASI (139 aa)) are extracellular. Cystine bridges form between Cys21-Cys43 and Cys40-Cys121. The 129-residue stretch at 22-150 (VEVDSETEAV…KIHIEVVDKA (129 aa)) folds into the Ig-like C2-type domain. Asn93, Asn110, Asn114, and Asn135 each carry an N-linked (GlcNAc...) asparagine glycan. Residues 158–179 (VSEIMMYVLIVVLTIWLVAEMV) traverse the membrane as a helical segment. Over 180–218 (YCYKKIAAATEAAAQENASEYLAITSESKENCTGVQVAE) the chain is Cytoplasmic.

The protein belongs to the sodium channel auxiliary subunit SCN1B (TC 8.A.17) family. As to quaternary structure, a voltage-gated sodium (Nav) channel consists of an ion-conducting pore-forming alpha subunit functional on its own that is regulated by one or more beta subunits. Interacts with SCN1A; regulatory subunit of SCN1A/Nav1.1. Interacts with SCN3A; regulatory subunit of SCN3A/Nav1.3. Interacts with SCN4A; regulatory subunit of SCN4A/Nav1.4. Interacts with SCN5A; regulatory subunit of SCN5A/Nav1.5. Interacts with SCN8A; regulatory subunit of SCN8A/Nav1.6. Interacts with SCN9A; regulatory subunit of SCN9A/Nav1.7. Interacts with SCN10A; regulatory subunit of SCN10A/Nav1.8. Interacts with NFASC. Interacts with TMEM65.

The protein localises to the cell membrane. The protein resides in the perikaryon. It is found in the cell projection. Its subcellular location is the axon. Functionally, regulatory subunit of multiple voltage-gated sodium (Nav) channels directly mediating the depolarization of excitable membranes. Navs, also called VGSCs (voltage-gated sodium channels) or VDSCs (voltage-dependent sodium channels), operate by switching between closed and open conformations depending on the voltage difference across the membrane. In the open conformation they allow Na(+) ions to selectively pass through the pore, along their electrochemical gradient. The influx of Na+ ions provokes membrane depolarization, initiating the propagation of electrical signals throughout cells and tissues. The accessory beta subunits participate in localization and functional modulation of the Nav channels. Modulates the activity of SCN1A/Nav1.1, SCN2A/Nav1.2, SCN3A/Nav1.3, SCN4A/Nav1.4, SCN5A/Nav1.5, SCN8A/Nav1.6, SCN9A/Nav1.7 and SCN10A/Nav1.8. The sequence is that of Sodium channel regulatory subunit beta-1 from Canis lupus familiaris (Dog).